A 647-amino-acid chain; its full sequence is Threonine--tRNA ligase (647 aa).

The 61-residue stretch at 1-61 (MIKITFPDGA…TEDGSIEIVT (61 aa)) folds into the TGS domain. The catalytic stretch occupies residues 242–540 (DHRKLGKELD…LIENYKGAFP (299 aa)). Residues Cys-336, His-387, and His-517 each coordinate Zn(2+).

It belongs to the class-II aminoacyl-tRNA synthetase family. In terms of assembly, homodimer. The cofactor is Zn(2+).

It localises to the cytoplasm. The enzyme catalyses tRNA(Thr) + L-threonine + ATP = L-threonyl-tRNA(Thr) + AMP + diphosphate + H(+). Its function is as follows. Catalyzes the attachment of threonine to tRNA(Thr) in a two-step reaction: L-threonine is first activated by ATP to form Thr-AMP and then transferred to the acceptor end of tRNA(Thr). Also edits incorrectly charged L-seryl-tRNA(Thr). The chain is Threonine--tRNA ligase from Streptococcus gordonii (strain Challis / ATCC 35105 / BCRC 15272 / CH1 / DL1 / V288).